The sequence spans 398 residues: MATPPLVPLLLLLLLLLPHAHHRLALRSVLATQRAQDSPAVHLINGLGQEPIQVLTFDLTRLVKASSSFELRTWDSEGVIFYGDTSPKDDWFMLGLRDGRPEIQMHNPWAQLTVGAGPRLDDGSWHQVHVKIRGDSVLLEVDGKEVLRLSQVSGTLHDKPQPVMKLAVGGLLFPPSSLRLPLVPALDGCLRRGSWLDPQAQISASAHASRRSCDVELQPGIFFPPGTHAEFSLQDIPQPQTEPWAFSLDLELKPSEGSGRLLALGTPEDPNWLSLHLQDQKVVLSSGMEPGLDLPLAWGLPLQLKLGVSTAVLSQGSKKQALGLPPSGLGPLLNLWAQPQGRLFLGALPGEDSSASFCLDGLWAQGQKLDMDKALNRSQDIWTHSCPSSPGNGTDTSH.

The N-terminal stretch at 1–31 (MATPPLVPLLLLLLLLLPHAHHRLALRSVLA) is a signal peptide. 2 consecutive Laminin G-like domains span residues 41-213 (VHLI…RRSC) and 220-386 (GIFF…THSC). Intrachain disulfides connect cysteine 189-cysteine 213 and cysteine 358-cysteine 386. N-linked (GlcNAc...) asparagine glycans are attached at residues asparagine 376 and asparagine 392.

In terms of assembly, homodimer.

The protein localises to the secreted. Functions as an androgen transport protein, but may also be involved in receptor mediated processes. Each dimer binds one molecule of steroid. Specific for 5-alpha-dihydrotestosterone, testosterone, and 17-beta-estradiol. Regulates the plasma metabolic clearance rate of steroid hormones by controlling their plasma concentration. This chain is Sex hormone-binding globulin (SHBG), found in Oryctolagus cuniculus (Rabbit).